A 102-amino-acid chain; its full sequence is Small ribosomal subunit protein uS10 (102 aa).

This sequence belongs to the universal ribosomal protein uS10 family. As to quaternary structure, part of the 30S ribosomal subunit.

Involved in the binding of tRNA to the ribosomes. The sequence is that of Small ribosomal subunit protein uS10 from Lactococcus lactis subsp. lactis (strain IL1403) (Streptococcus lactis).